The primary structure comprises 230 residues: Phosphoglycolate phosphatase (230 aa).

Asp-9 acts as the Nucleophile in catalysis. Residues Asp-9, Asp-11, and Asp-175 each coordinate Mg(2+).

It belongs to the HAD-like hydrolase superfamily. CbbY/CbbZ/Gph/YieH family. Requires Mg(2+) as cofactor.

The catalysed reaction is 2-phosphoglycolate + H2O = glycolate + phosphate. It functions in the pathway organic acid metabolism; glycolate biosynthesis; glycolate from 2-phosphoglycolate: step 1/1. In terms of biological role, specifically catalyzes the dephosphorylation of 2-phosphoglycolate. Is involved in the dissimilation of the intracellular 2-phosphoglycolate formed during the DNA repair of 3'-phosphoglycolate ends, a major class of DNA lesions induced by oxidative stress. This Psychrobacter arcticus (strain DSM 17307 / VKM B-2377 / 273-4) protein is Phosphoglycolate phosphatase.